Here is a 122-residue protein sequence, read N- to C-terminus: Large ribosomal subunit protein bL12 (122 aa).

Belongs to the bacterial ribosomal protein bL12 family. As to quaternary structure, homodimer. Part of the ribosomal stalk of the 50S ribosomal subunit. Forms a multimeric L10(L12)X complex, where L10 forms an elongated spine to which 2 to 4 L12 dimers bind in a sequential fashion. Binds GTP-bound translation factors.

Forms part of the ribosomal stalk which helps the ribosome interact with GTP-bound translation factors. Is thus essential for accurate translation. In Xanthomonas oryzae pv. oryzae (strain MAFF 311018), this protein is Large ribosomal subunit protein bL12.